Reading from the N-terminus, the 134-residue chain is Ribonuclease P protein component 2 (134 aa).

Belongs to the eukaryotic/archaeal RNase P protein component 2 family. As to quaternary structure, consists of a catalytic RNA component and at least 4-5 protein subunits. Forms a subcomplex with Rnp3 which stimulates the catalytic RNA.

It is found in the cytoplasm. The enzyme catalyses Endonucleolytic cleavage of RNA, removing 5'-extranucleotides from tRNA precursor.. Functionally, part of ribonuclease P, a protein complex that generates mature tRNA molecules by cleaving their 5'-ends. This chain is Ribonuclease P protein component 2, found in Methanocaldococcus jannaschii (strain ATCC 43067 / DSM 2661 / JAL-1 / JCM 10045 / NBRC 100440) (Methanococcus jannaschii).